Here is a 168-residue protein sequence, read N- to C-terminus: T-cell surface glycoprotein CD3 delta chain (168 aa).

A signal peptide spans methionine 1–proline 21. Over arginine 22–alanine 102 the chain is Extracellular. A disulfide bridge connects residues cysteine 37 and cysteine 74. N-linked (GlcNAc...) asparagine glycosylation is found at asparagine 38 and asparagine 56. A helical membrane pass occupies residues glycine 103–alanine 123. Residues glycine 124–lysine 168 are Cytoplasmic-facing. Positions aspartate 135–lysine 163 constitute an ITAM domain. Tyrosine 146 and tyrosine 157 each carry phosphotyrosine.

As to quaternary structure, the TCR-CD3 complex is composed of a CD3D/CD3E and a CD3G/CD3E heterodimers that preferentially associate with TCRalpha and TCRbeta, respectively, to form TCRalpha/CD3E/CD3G and TCRbeta/CD3G/CD3E trimers. In turn, the hexamer interacts with CD3Z homodimer to form the TCR-CD3 complex. Alternatively, TCRalpha and TCRbeta can be replaced by TCRgamma and TCRdelta. Interacts with coreceptors CD4 and CD8. In terms of processing, phosphorylated on Tyr residues after T-cell receptor triggering by LCK in association with CD4/CD8. CD3D is mostly present on T-lymphocytes with its TCR-CD3 partners. Present also in fetal NK-cells.

The protein localises to the cell membrane. In terms of biological role, part of the TCR-CD3 complex present on T-lymphocyte cell surface that plays an essential role in adaptive immune response. When antigen presenting cells (APCs) activate T-cell receptor (TCR), TCR-mediated signals are transmitted across the cell membrane by the CD3 chains CD3D, CD3E, CD3G and CD3Z. All CD3 chains contain immunoreceptor tyrosine-based activation motifs (ITAMs) in their cytoplasmic domain. Upon TCR engagement, these motifs become phosphorylated by Src family protein tyrosine kinases LCK and FYN, resulting in the activation of downstream signaling pathways. In addition of this role of signal transduction in T-cell activation, CD3D plays an essential role in thymocyte differentiation. Indeed, participates in correct intracellular TCR-CD3 complex assembly and surface expression. In absence of a functional TCR-CD3 complex, thymocytes are unable to differentiate properly. Interacts with CD4 and CD8 and thus serves to establish a functional link between the TCR and coreceptors CD4 and CD8, which is needed for activation and positive selection of CD4 or CD8 T-cells. The sequence is that of T-cell surface glycoprotein CD3 delta chain (CD3D) from Bos taurus (Bovine).